Reading from the N-terminus, the 326-residue chain is MSSRSLSAIVLLLGALVTACLASNGDRTQFFHNCRQNCERTNCSADGLEIQEQAVKFYQQSVFDRLFQWSCADECQYGCMWRTVFAFFERGWPIPQFYGKWPFLRLLGMQEPASVIFSCLNFVVHLRLLRKFRREVRPDSPCYMLTHIFAVTSLNGWIWSAIFHTRDFPLTELLDYAFAYSIILCSLYVMVMRMLHRYSLFLRGVITLAFLSYYINYFAYLSVGRFNYAFNMMVNVATGVIAAVGWFVWCHFVRTRRPYFRRILRFYILMALAMSLELLDFPPILWILDAHALWHLATIPLASLYYECVEILLYSNIATCVCILAS.

A signal peptide spans methionine 1–alanine 22. Residues serine 23–arginine 105 lie on the Lumenal side of the membrane. A glycan (N-linked (GlcNAc...) asparagine) is linked at asparagine 42. Residues leucine 106–leucine 126 form a helical membrane-spanning segment. Topologically, residues arginine 127–cysteine 142 are cytoplasmic. A helical transmembrane segment spans residues tyrosine 143–phenylalanine 163. Residues histidine 164 to threonine 171 lie on the Lumenal side of the membrane. The helical transmembrane segment at glutamate 172–methionine 192 threads the bilayer. Residues arginine 193–arginine 203 lie on the Cytoplasmic side of the membrane. The helical transmembrane segment at glycine 204–glycine 224 threads the bilayer. Topologically, residues arginine 225–methionine 232 are lumenal. The helical transmembrane segment at methionine 233–valine 253 threads the bilayer. Residues arginine 254 to tyrosine 267 are Cytoplasmic-facing. Residues isoleucine 268–leucine 288 traverse the membrane as a helical segment. The Lumenal portion of the chain corresponds to aspartate 289 to alanine 302. Residues serine 303–alanine 325 traverse the membrane as a helical segment. Position 326 (serine 326) is a topological domain, cytoplasmic.

It belongs to the PGAP3 family.

It localises to the golgi apparatus membrane. In terms of biological role, involved in the lipid remodeling steps of GPI-anchor maturation. The protein is Post-GPI attachment to proteins factor 3 (PGAP3) of Drosophila melanogaster (Fruit fly).